Here is a 158-residue protein sequence, read N- to C-terminus: Phosphopantetheine adenylyltransferase (158 aa).

Threonine 9 provides a ligand contact to substrate. Residues 9–10 (TF) and histidine 17 each bind ATP. Residues lysine 41, leucine 73, and arginine 87 each coordinate substrate. ATP contacts are provided by residues 88-90 (GVR), glutamate 98, and 123-129 (WSYVSST).

It belongs to the bacterial CoaD family. In terms of assembly, homohexamer. It depends on Mg(2+) as a cofactor.

The protein resides in the cytoplasm. It catalyses the reaction (R)-4'-phosphopantetheine + ATP + H(+) = 3'-dephospho-CoA + diphosphate. Its pathway is cofactor biosynthesis; coenzyme A biosynthesis; CoA from (R)-pantothenate: step 4/5. Reversibly transfers an adenylyl group from ATP to 4'-phosphopantetheine, yielding dephospho-CoA (dPCoA) and pyrophosphate. This Pasteurella multocida (strain Pm70) protein is Phosphopantetheine adenylyltransferase.